Here is a 361-residue protein sequence, read N- to C-terminus: sn-glycerol-3-phosphate import ATP-binding protein UgpC (361 aa).

In terms of domain architecture, ABC transporter spans 4 to 235 (LSLKGVRKSY…PATVFVAGFI (232 aa)). An ATP-binding site is contributed by 37–44 (GPSGCGKS).

The protein belongs to the ABC transporter superfamily. sn-glycerol-3-phosphate importer (TC 3.A.1.1.3) family. As to quaternary structure, the complex is composed of two ATP-binding proteins (UgpC), two transmembrane proteins (UgpA and UgpE) and a solute-binding protein (UgpB).

Its subcellular location is the cell inner membrane. The enzyme catalyses sn-glycerol 3-phosphate(out) + ATP + H2O = sn-glycerol 3-phosphate(in) + ADP + phosphate + H(+). Functionally, part of the ABC transporter complex UgpBAEC involved in sn-glycerol-3-phosphate (G3P) import. Responsible for energy coupling to the transport system. This is sn-glycerol-3-phosphate import ATP-binding protein UgpC from Burkholderia lata (strain ATCC 17760 / DSM 23089 / LMG 22485 / NCIMB 9086 / R18194 / 383).